Reading from the N-terminus, the 263-residue chain is (R)-S-adenosyl-L-methionine hydrolase (263 aa).

Asp18, Asp82, and Asn181 together coordinate adenosine. Residues Asn181, Tyr221, Ser234, Glu239, and Met244 each contribute to the (R)-S-adenosyl-L-methionine site.

It belongs to the SAM hydrolase / SAM-dependent halogenase family. In terms of assembly, homotrimer.

It carries out the reaction (R)-S-adenosyl-L-methionine + H2O = adenosine + L-methionine + H(+). In terms of biological role, catalyzes the hydrolysis of S-adenosyl-L-methionine (SAM) into adenosine and L-methionine. Does not have chlorinase or fluorinase activity. This Methanocaldococcus jannaschii (strain ATCC 43067 / DSM 2661 / JAL-1 / JCM 10045 / NBRC 100440) (Methanococcus jannaschii) protein is (R)-S-adenosyl-L-methionine hydrolase.